A 483-amino-acid polypeptide reads, in one-letter code: Phloretin 2'-O-glucosyltransferase (483 aa).

The active-site Proton acceptor is the His15. Residue His15 coordinates an anthocyanidin. The Charge relay role is filled by Asp118. UDP-alpha-D-glucose is bound by residues Thr140, Ala360, Gln362, His377, Trp380, Asn381, Ser382, and Glu385. Ala400 is an an anthocyanidin binding site. UDP-alpha-D-glucose-binding residues include Glu401 and Gln402.

It belongs to the UDP-glycosyltransferase family.

The enzyme catalyses phloretin + UDP-alpha-D-glucose = phlorizin + UDP + H(+). Glycosyltransferase that possesses phloretin 2'-O-glycosyltransferase activity. Converts phloretin to phlorizin (phloretin 2'-O-glucoside), a potent antioxidant. Is specific for phloretin and does not possess glycosyltransferase activity toward naringenin, naringenin chalcone, eriodictyol, eriodictyol chalcone, apigenin, luteolin, kaempferol, quercetin, isoliquiritigenin, butein, caffeic acid, 2-coumaric acid, 3-coumaric acid, 3-hydroxybenzoic acid, 3,4-dihydroxybenzoic acid and 3,4-dihydroxyhydrocinnamic acid. Can glycosylate phloretin in the presence of UDP-glucose, UDP-xylose and UDP-galactose. This chain is Phloretin 2'-O-glucosyltransferase, found in Pyrus communis (Pear).